The sequence spans 216 residues: Large ribosomal subunit protein uL4 (216 aa).

The tract at residues 51-78 is disordered; sequence KGRSEVHGSNTKPYKQKGTGRARRGDKK. Positions 64–76 are enriched in basic residues; it reads YKQKGTGRARRGD.

It belongs to the universal ribosomal protein uL4 family. Part of the 50S ribosomal subunit.

In terms of biological role, one of the primary rRNA binding proteins, this protein initially binds near the 5'-end of the 23S rRNA. It is important during the early stages of 50S assembly. It makes multiple contacts with different domains of the 23S rRNA in the assembled 50S subunit and ribosome. Forms part of the polypeptide exit tunnel. In Treponema pallidum (strain Nichols), this protein is Large ribosomal subunit protein uL4.